A 275-amino-acid polypeptide reads, in one-letter code: Sulfate transporter CysZ (275 aa).

The tract at residues 1 to 24 is disordered; sequence MSSEKSSFPEKPPSFEKPSHSNTA. The span at 13–24 shows a compositional bias: basic and acidic residues; sequence PSFEKPSHSNTA. The next 4 helical transmembrane spans lie at 49–69, 93–113, 169–189, and 232–252; these read FVILPLLMNIVLMGGAFWWLF, LIWPLAVLSILLVFSYLFSTI, IVLLLLYFIPGIGQTVAPVLW, and ALVSLFTLVPFLNLVIMPVAV.

The protein belongs to the CysZ family.

The protein localises to the cell inner membrane. High affinity, high specificity proton-dependent sulfate transporter, which mediates sulfate uptake. Provides the sulfur source for the cysteine synthesis pathway. The protein is Sulfate transporter CysZ of Pectobacterium atrosepticum (strain SCRI 1043 / ATCC BAA-672) (Erwinia carotovora subsp. atroseptica).